Consider the following 235-residue polypeptide: Vinculin (235 aa).

This sequence belongs to the vinculin/alpha-catenin family. Exhibits self-association properties. Phosphorylated on serines, threonines and tyrosines. In terms of processing, acetylated by myristic acid and/or palmitic acid.

The protein resides in the cell membrane. It localises to the cell junction. It is found in the adherens junction. The protein localises to the focal adhesion. Its subcellular location is the cytoplasm. The protein resides in the cytoskeleton. It localises to the sarcolemma. It is found in the cell projection. The protein localises to the podosome. Functionally, involved in cell adhesion. May be involved in the attachment of the actin-based microfilaments to the plasma membrane. This chain is Vinculin (vcl), found in Xenopus laevis (African clawed frog).